Reading from the N-terminus, the 74-residue chain is UPF0435 protein BAA_0470 (74 aa).

This sequence belongs to the UPF0435 family.

This is UPF0435 protein BAA_0470 from Bacillus anthracis (strain A0248).